The following is a 110-amino-acid chain: DNA-directed RNA polymerase subunit omega (110 aa).

It belongs to the RNA polymerase subunit omega family. In terms of assembly, the RNAP catalytic core consists of 2 alpha, 1 beta, 1 beta' and 1 omega subunit. When a sigma factor is associated with the core the holoenzyme is formed, which can initiate transcription.

It carries out the reaction RNA(n) + a ribonucleoside 5'-triphosphate = RNA(n+1) + diphosphate. Functionally, promotes RNA polymerase assembly. Latches the N- and C-terminal regions of the beta' subunit thereby facilitating its interaction with the beta and alpha subunits. This is DNA-directed RNA polymerase subunit omega from Nocardioides sp. (strain ATCC BAA-499 / JS614).